A 340-amino-acid polypeptide reads, in one-letter code: Flavonoid 7-O-methyltransferase 1 (340 aa).

Aspartate 207 contributes to the S-adenosyl-L-methionine binding site. The active-site Proton acceptor is the histidine 245.

This sequence belongs to the class I-like SAM-binding methyltransferase superfamily. Cation-independent O-methyltransferase family. As to quaternary structure, homodimer. Expressed in leaves.

The enzyme catalyses (2S)-naringenin + S-adenosyl-L-methionine = (2S)-sakuranetin + S-adenosyl-L-homocysteine + H(+). The catalysed reaction is scutellarein + S-adenosyl-L-methionine = scutellarein 7-methyl ether + S-adenosyl-L-homocysteine. It catalyses the reaction apigenin + S-adenosyl-L-methionine = genkwanin + S-adenosyl-L-homocysteine + H(+). It carries out the reaction luteolin + S-adenosyl-L-methionine = luteolin 7-methyl ether + S-adenosyl-L-homocysteine + H(+). The enzyme catalyses chrysoeriol + S-adenosyl-L-methionine = velutin + S-adenosyl-L-homocysteine. The catalysed reaction is diosmetin + S-adenosyl-L-methionine = luteolin 4',7-dimethyl ether + S-adenosyl-L-homocysteine. It catalyses the reaction acacetin + S-adenosyl-L-methionine = apigenin 4',7-dimethyl ether + S-adenosyl-L-homocysteine. It carries out the reaction scutellarein 4'-methyl ether + S-adenosyl-L-methionine = ladanein + S-adenosyl-L-homocysteine. Its pathway is flavonoid metabolism. Functionally, flavonoid 7-O-methyltransferase involved in the biosynthesis of polymethoxylated flavonoids natural products such as nevadensin and salvigenin, aroma compounds which contribute to the flavor of sweet basil, and exhibit pharmacological activities such as anti-allergic, anti-oxidant, antibacterial, anti-proliferative, and anti-inflammatory effects. Catalyzes S-adenosylmethionine-dependent regioselective 7-O-methylation of flavonoids; active on various hydroxylated flavonoid substrates, including apigenin (API) and luteolin (LUT), and, with a lower efficiency, scutellarein (SCU), naringenin (NAR), chrysoeriol (CHRYS), diosmetin (DIOS), acacetin (ACA) and scutellarein-7-methyl ether (SCU7Me). The sequence is that of Flavonoid 7-O-methyltransferase 1 from Ocimum basilicum (Sweet basil).